A 251-amino-acid chain; its full sequence is Small ribosomal subunit protein uS2B (251 aa).

Ser2 bears the N-acetylserine mark. Positions 214–225 (AVEEASATGATE) are enriched in low complexity. A disordered region spans residues 214–251 (AVEEASATGATEEATEEATEETTEATEWAEDNTENATW). Residues 226–251 (EATEEATEETTEATEWAEDNTENATW) are compositionally biased toward acidic residues.

It belongs to the universal ribosomal protein uS2 family. Component of the small ribosomal subunit. Mature ribosomes consist of a small (40S) and a large (60S) subunit. The 40S subunit contains about 33 different proteins and 1 molecule of RNA (18S). The 60S subunit contains about 49 different proteins and 3 molecules of RNA (25S, 5.8S and 5S). Interacts with RPS21.

Its subcellular location is the cytoplasm. Its function is as follows. Required for the assembly and/or stability of the 40S ribosomal subunit. Required for the processing of the 20S rRNA-precursor to mature 18S rRNA in a late step of the maturation of 40S ribosomal subunits. The protein is Small ribosomal subunit protein uS2B of Vanderwaltozyma polyspora (strain ATCC 22028 / DSM 70294 / BCRC 21397 / CBS 2163 / NBRC 10782 / NRRL Y-8283 / UCD 57-17) (Kluyveromyces polysporus).